Here is a 238-residue protein sequence, read N- to C-terminus: Orotidine 5'-phosphate decarboxylase (238 aa).

Residues aspartate 10, lysine 32, 59–68 (DLKLHDIPNT), threonine 122, arginine 184, glutamine 193, glycine 213, and arginine 214 each bind substrate. Lysine 61 (proton donor) is an active-site residue.

This sequence belongs to the OMP decarboxylase family. Type 1 subfamily. In terms of assembly, homodimer.

It carries out the reaction orotidine 5'-phosphate + H(+) = UMP + CO2. It participates in pyrimidine metabolism; UMP biosynthesis via de novo pathway; UMP from orotate: step 2/2. Functionally, catalyzes the decarboxylation of orotidine 5'-monophosphate (OMP) to uridine 5'-monophosphate (UMP). The polypeptide is Orotidine 5'-phosphate decarboxylase (Bacillus cereus (strain ATCC 10987 / NRS 248)).